A 74-amino-acid polypeptide reads, in one-letter code: MAVFEKVQEIIVEELGKETEEVTLETTFDDLDADSLDVFQVISEIEDAFDIQIETEEGLNTVGDLVAYVEEKSK.

One can recognise a Carrier domain in the interval 1 to 73 (MAVFEKVQEI…DLVAYVEEKS (73 aa)). Ser35 carries the post-translational modification O-(pantetheine 4'-phosphoryl)serine.

This sequence belongs to the acyl carrier protein (ACP) family. In terms of processing, 4'-phosphopantetheine is transferred from CoA to a specific serine of apo-ACP by AcpS. This modification is essential for activity because fatty acids are bound in thioester linkage to the sulfhydryl of the prosthetic group.

It localises to the cytoplasm. It functions in the pathway lipid metabolism; fatty acid biosynthesis. In terms of biological role, carrier of the growing fatty acid chain in fatty acid biosynthesis. The sequence is that of Acyl carrier protein from Streptococcus pyogenes serotype M1.